Reading from the N-terminus, the 434-residue chain is Homogentisate 1,2-dioxygenase (434 aa).

The active-site Proton acceptor is the His289. Residues His332 and Glu338 each coordinate Fe cation. Homogentisate-binding residues include Tyr347 and His368. Position 368 (His368) interacts with Fe cation.

It belongs to the homogentisate dioxygenase family. As to quaternary structure, hexamer; dimer of trimers. It depends on Fe cation as a cofactor.

It catalyses the reaction homogentisate + O2 = 4-maleylacetoacetate + H(+). The protein operates within amino-acid degradation; L-phenylalanine degradation; acetoacetate and fumarate from L-phenylalanine: step 4/6. In terms of biological role, involved in the catabolism of homogentisate (2,5-dihydroxyphenylacetate or 2,5-OH-PhAc), a central intermediate in the degradation of phenylalanine and tyrosine. Catalyzes the oxidative ring cleavage of the aromatic ring of homogentisate to yield maleylacetoacetate. The protein is Homogentisate 1,2-dioxygenase of Pseudomonas fluorescens (strain ATCC BAA-477 / NRRL B-23932 / Pf-5).